The following is a 389-amino-acid chain: Phospho-N-acetylmuramoyl-pentapeptide-transferase (389 aa).

10 helical membrane passes run 25-45 (RAVA…PWVI), 73-93 (TMGG…WADL), 97-117 (FIWI…VDDY), 135-155 (FWQS…VSEA), 189-209 (SMTY…VIVG), 222-242 (GLVI…AYVM), 259-279 (AGEM…FLWF), 286-306 (VFMG…IAVI), 311-331 (IVLF…MLQV), and 366-386 (QVVV…LSTL).

This sequence belongs to the glycosyltransferase 4 family. MraY subfamily. Mg(2+) is required as a cofactor.

Its subcellular location is the cell inner membrane. It catalyses the reaction UDP-N-acetyl-alpha-D-muramoyl-L-alanyl-gamma-D-glutamyl-meso-2,6-diaminopimeloyl-D-alanyl-D-alanine + di-trans,octa-cis-undecaprenyl phosphate = di-trans,octa-cis-undecaprenyl diphospho-N-acetyl-alpha-D-muramoyl-L-alanyl-D-glutamyl-meso-2,6-diaminopimeloyl-D-alanyl-D-alanine + UMP. It participates in cell wall biogenesis; peptidoglycan biosynthesis. Functionally, catalyzes the initial step of the lipid cycle reactions in the biosynthesis of the cell wall peptidoglycan: transfers peptidoglycan precursor phospho-MurNAc-pentapeptide from UDP-MurNAc-pentapeptide onto the lipid carrier undecaprenyl phosphate, yielding undecaprenyl-pyrophosphoryl-MurNAc-pentapeptide, known as lipid I. The chain is Phospho-N-acetylmuramoyl-pentapeptide-transferase from Paraburkholderia phymatum (strain DSM 17167 / CIP 108236 / LMG 21445 / STM815) (Burkholderia phymatum).